The chain runs to 805 residues: Phenylalanine--tRNA ligase beta subunit (805 aa).

The tRNA-binding domain occupies alanine 39 to arginine 148. The 76-residue stretch at proline 399–aspartate 474 folds into the B5 domain. Residues aspartate 452, aspartate 458, glutamate 461, and glutamate 462 each contribute to the Mg(2+) site. Residues serine 703 to arginine 804 form the FDX-ACB domain.

The protein belongs to the phenylalanyl-tRNA synthetase beta subunit family. Type 1 subfamily. Tetramer of two alpha and two beta subunits. Requires Mg(2+) as cofactor.

The protein localises to the cytoplasm. It catalyses the reaction tRNA(Phe) + L-phenylalanine + ATP = L-phenylalanyl-tRNA(Phe) + AMP + diphosphate + H(+). This is Phenylalanine--tRNA ligase beta subunit from Bordetella pertussis (strain Tohama I / ATCC BAA-589 / NCTC 13251).